We begin with the raw amino-acid sequence, 360 residues long: Ribosomal RNA large subunit methyltransferase F (360 aa).

The interval 1–36 (MSKLISKQGKRPALSQSGLAKPSTSKKSSASKNANT) is disordered. The segment covering 23-36 (STSKKSSASKNANT) has biased composition (low complexity).

Belongs to the methyltransferase superfamily. METTL16/RlmF family.

The protein resides in the cytoplasm. It catalyses the reaction adenosine(1618) in 23S rRNA + S-adenosyl-L-methionine = N(6)-methyladenosine(1618) in 23S rRNA + S-adenosyl-L-homocysteine + H(+). Its function is as follows. Specifically methylates the adenine in position 1618 of 23S rRNA. The polypeptide is Ribosomal RNA large subunit methyltransferase F (Shewanella denitrificans (strain OS217 / ATCC BAA-1090 / DSM 15013)).